The primary structure comprises 191 residues: Ciliary microtubule-associated protein 3 (191 aa).

As to quaternary structure, interacts with proteins involved in ciliary transport, including ARL13B, CETN1, KIF3A, RAB6A, RAB8A, TUBB1 and TUBG1. Interacts with AURKA.

Its subcellular location is the cytoplasmic vesicle. The protein localises to the golgi apparatus. It is found in the trans-Golgi network. It localises to the cytoplasm. In terms of biological role, during primary cilia disassembly, involved in cilia disassembly. Required specifically to control cilia retraction as well as the liberation and duplication of the basal body/centrosome. May act by stimulating AURKA activity at the basal body in a cell cycle-dependent manner. The polypeptide is Ciliary microtubule-associated protein 3 (Homo sapiens (Human)).